The sequence spans 520 residues: Glutamate--cysteine ligase (520 aa).

This sequence belongs to the glutamate--cysteine ligase type 1 family. Type 1 subfamily.

It carries out the reaction L-cysteine + L-glutamate + ATP = gamma-L-glutamyl-L-cysteine + ADP + phosphate + H(+). The protein operates within sulfur metabolism; glutathione biosynthesis; glutathione from L-cysteine and L-glutamate: step 1/2. This chain is Glutamate--cysteine ligase, found in Serratia proteamaculans (strain 568).